Reading from the N-terminus, the 465-residue chain is Ribulose bisphosphate carboxylase large chain (465 aa).

At lysine 4 the chain carries N6,N6,N6-trimethyllysine. Positions 113 and 163 each coordinate substrate. Lysine 165 functions as the Proton acceptor in the catalytic mechanism. Lysine 167 serves as a coordination point for substrate. Mg(2+)-binding residues include lysine 191, aspartate 193, and glutamate 194. Lysine 191 bears the N6-carboxylysine mark. The active-site Proton acceptor is the histidine 284. Substrate is bound by residues arginine 285, histidine 317, and serine 369.

This sequence belongs to the RuBisCO large chain family. Type I subfamily. Heterohexadecamer of 8 large chains and 8 small chains; disulfide-linked. The disulfide link is formed within the large subunit homodimers. It depends on Mg(2+) as a cofactor. The disulfide bond which can form in the large chain dimeric partners within the hexadecamer appears to be associated with oxidative stress and protein turnover.

It is found in the plastid. The protein localises to the chloroplast. The enzyme catalyses 2 (2R)-3-phosphoglycerate + 2 H(+) = D-ribulose 1,5-bisphosphate + CO2 + H2O. It carries out the reaction D-ribulose 1,5-bisphosphate + O2 = 2-phosphoglycolate + (2R)-3-phosphoglycerate + 2 H(+). RuBisCO catalyzes two reactions: the carboxylation of D-ribulose 1,5-bisphosphate, the primary event in carbon dioxide fixation, as well as the oxidative fragmentation of the pentose substrate in the photorespiration process. Both reactions occur simultaneously and in competition at the same active site. This chain is Ribulose bisphosphate carboxylase large chain, found in Cornus canadensis (Bunchberry dogwood).